The primary structure comprises 180 residues: Oligoribonuclease (180 aa).

One can recognise an Exonuclease domain in the interval 7–170; sequence LIWIDLEMTG…DDIRESIAEL (164 aa). Tyr128 is an active-site residue.

Belongs to the oligoribonuclease family.

It localises to the cytoplasm. Its function is as follows. 3'-to-5' exoribonuclease specific for small oligoribonucleotides. This is Oligoribonuclease from Ectopseudomonas mendocina (strain ymp) (Pseudomonas mendocina).